A 91-amino-acid chain; its full sequence is Small ribosomal subunit protein uS19 (91 aa).

Belongs to the universal ribosomal protein uS19 family.

Its function is as follows. Protein S19 forms a complex with S13 that binds strongly to the 16S ribosomal RNA. In Marinobacter nauticus (strain ATCC 700491 / DSM 11845 / VT8) (Marinobacter aquaeolei), this protein is Small ribosomal subunit protein uS19.